We begin with the raw amino-acid sequence, 210 residues long: Thymidylate kinase (210 aa).

10–17 is a binding site for ATP; it reads GPEGAGKS.

Belongs to the thymidylate kinase family.

The enzyme catalyses dTMP + ATP = dTDP + ADP. Phosphorylation of dTMP to form dTDP in both de novo and salvage pathways of dTTP synthesis. This chain is Thymidylate kinase, found in Pseudomonas aeruginosa (strain LESB58).